Reading from the N-terminus, the 480-residue chain is UDP-glucose 6-dehydrogenase 3 (480 aa).

NAD(+) contacts are provided by residues 8 to 13 (GAGYVG), D33, R38, 86 to 90 (VNTPT), 127 to 128 (ST), and E161. Substrate contacts are provided by residues 157–161 (EFLAE), 216–223 (KLAANAFL), and 256–269 (RIGPKFLNSSVGFG). The active-site Nucleophile is the C272. Residue 272 to 275 (CFQK) participates in NAD(+) binding. 334–335 (FK) is a substrate binding site. NAD(+) is bound at residue R342. Residue R447 coordinates substrate.

Belongs to the UDP-glucose/GDP-mannose dehydrogenase family.

The catalysed reaction is UDP-alpha-D-glucose + 2 NAD(+) + H2O = UDP-alpha-D-glucuronate + 2 NADH + 3 H(+). Its pathway is nucleotide-sugar biosynthesis; UDP-alpha-D-glucuronate biosynthesis; UDP-alpha-D-glucuronate from UDP-alpha-D-glucose: step 1/1. Its activity is regulated as follows. Inhibited by UDP-xylose. Involved in the biosynthesis of UDP-glucuronic acid (UDP-GlcA), providing nucleotide sugars for cell-wall polymers. Required for the formation of cell wall ingrowths on the outer cell walls of nematode-induced syncytia. This Arabidopsis thaliana (Mouse-ear cress) protein is UDP-glucose 6-dehydrogenase 3 (UGD3).